We begin with the raw amino-acid sequence, 234 residues long: Endonuclease V (234 aa).

Residues D36 and D104 each coordinate Mg(2+).

The protein belongs to the endonuclease V family. Requires Mg(2+) as cofactor.

The protein localises to the cytoplasm. The catalysed reaction is Endonucleolytic cleavage at apurinic or apyrimidinic sites to products with a 5'-phosphate.. Functionally, DNA repair enzyme involved in the repair of deaminated bases. Selectively cleaves double-stranded DNA at the second phosphodiester bond 3' to a deoxyinosine leaving behind the intact lesion on the nicked DNA. The chain is Endonuclease V from Yersinia enterocolitica serotype O:8 / biotype 1B (strain NCTC 13174 / 8081).